A 271-amino-acid polypeptide reads, in one-letter code: NADPH-dependent 7-cyano-7-deazaguanine reductase (271 aa).

81–83 (IES) contributes to the substrate binding site. Residue 83–84 (SK) coordinates NADPH. The active-site Thioimide intermediate is Cys177. Catalysis depends on Asp184, which acts as the Proton donor. Residue 216-217 (HE) participates in substrate binding. 245–246 (RG) contributes to the NADPH binding site.

It belongs to the GTP cyclohydrolase I family. QueF type 2 subfamily. As to quaternary structure, homodimer.

It localises to the cytoplasm. The enzyme catalyses 7-aminomethyl-7-carbaguanine + 2 NADP(+) = 7-cyano-7-deazaguanine + 2 NADPH + 3 H(+). It functions in the pathway tRNA modification; tRNA-queuosine biosynthesis. Its function is as follows. Catalyzes the NADPH-dependent reduction of 7-cyano-7-deazaguanine (preQ0) to 7-aminomethyl-7-deazaguanine (preQ1). The chain is NADPH-dependent 7-cyano-7-deazaguanine reductase from Xanthomonas campestris pv. campestris (strain B100).